A 474-amino-acid chain; its full sequence is Alkylcitrate dehydratase phiI (474 aa).

Belongs to the PrpD family. As to quaternary structure, monomer.

The enzyme catalyses (4E,11E)-2-hydroxytrideca-4,11-dien-1,2,3-tricarboxylate + 2 H(+) = [4-(deca-1,8-diyl)-2,5-dioxo-2,5-dihydro-3-furanyl]acetate + 2 H2O. It participates in secondary metabolite biosynthesis. Functionally, alkylcitrate dehydratasee; part of the gene cluster that mediates the biosynthesis of the antihypercholesterolemic agents phomoidrides which are dimeric anhydrides. Within the pathway, the alkylcitrate synthase (ACS) tstiJ and the alkylcitrate dehydratase (ACDH) tstI produce the decarboxylated monomeric anhydrides by coupling the C12-fatty acyl product from phiA with oxalacetic acid. The pathway begins with the highly reducing polyketide synthase tstA that catalyzes the formation of a C12-fatty acyl-ACP, starting from one acetate and 5 malonate units. The hydrolase tstM is involved in the release of the C12-fatty acyl chain from phiA. The alkylcitrate synthase (ACS) tstJ and the alkylcitrate dehydratase (ACDH) tstI then give rise to decarboxylated monomeric anhydrides by coupling the C12-fatty acyl chain with oxalacetic acid. The cyclase tstC is responsible for the dimerization of the monomeric anhydrides which leads to the production of prephomoidride that contains the characteristic bicyclo[4.3.1]deca-1,6-diene system of phomoidrides. Iterative oxidation catalyzed by the alpha-ketoglutarate-dependent dioxygenase tstK produced then phomoidride A. Finally, the methyltransferase tstE converts phomoidride A to phomoidride B via an acetalization reaction. The phosphatidylethanolamine-binding protein tstB and tstN are not essential for dimerization and their functions have still to be determined. The chain is Alkylcitrate dehydratase phiI from Talaromyces stipitatus (strain ATCC 10500 / CBS 375.48 / QM 6759 / NRRL 1006) (Penicillium stipitatum).